Consider the following 76-residue polypeptide: Rhesus theta defensin-1/2 subunit B (76 aa).

A signal peptide spans 1-22; the sequence is MRTFALLTAMLLLVALHAQAEA. Positions 23-64 are excised as a propeptide; sequence RQARADEAAAQQQPGADDQGMAHSFTRPENAALPLSESARGL. The disordered stretch occupies residues 25–54; that stretch reads ARADEAAAQQQPGADDQGMAHSFTRPENAA. The span at 30–44 shows a compositional bias: low complexity; the sequence is AAAQQQPGADDQGMA. A Cyclopeptide (Arg-Cys) (interchain with C-73 in subunit A); in form RTD-1 cross-link involves residue Arg-65. Residue Arg-65 forms a Cyclopeptide (Arg-Cys) (interchain with C-73 in subunit B); in form RTD-2 linkage. A disulfide bridge connects residues Cys-68 and Cys-73. A Cyclopeptide (Cys-Arg) (interchain with R-65 in subunit A); in form RTD-1 cross-link involves residue Cys-73. Cys-73 is covalently cross-linked (Cyclopeptide (Cys-Arg) (interchain with R-65 in subunit B); in form RTD-2). Residues 74–76 constitute a propeptide that is removed on maturation; the sequence is QLL.

The protein belongs to the alpha-defensin family. Theta subfamily. In terms of assembly, RTD-1 is a cyclic heterodimer composed of subunits A and B; disulfide-linked. RTD-2 is a cyclic homodimer composed of two subunits B; disulfide-linked. Forms a cyclic peptide with 1 subunit B (RTD-2) or with 1 subunit A (RTD-1). An additional intersubunit disulfide bond is formed. In terms of tissue distribution, RTD-1 is expressed in bone marrow. Detected in promyelocytes, myelocytes and mature neutrophils and monocytes.

Its function is as follows. RTD-1 and RTD-2 have similar antimicrobial activities against the Gram-positive bacteria S.aureus 502A and L.monocytogenes, the Gram-negative bacterium S.typhimurium, and the fungi C.albicans 16820 and C.neoformans 271A. RTD-2 is 2-3-fold less active than RTD-1 against E.coli ML35. The polypeptide is Rhesus theta defensin-1/2 subunit B (RTD1B) (Macaca mulatta (Rhesus macaque)).